Reading from the N-terminus, the 221-residue chain is UPF0319 protein NTHI1987 (221 aa).

A signal peptide spans M1 to A21.

This sequence belongs to the UPF0319 family.

In Haemophilus influenzae (strain 86-028NP), this protein is UPF0319 protein NTHI1987.